The following is a 475-amino-acid chain: Ribulose bisphosphate carboxylase large chain (475 aa).

The propeptide occupies 1–2; it reads MV. Residue Pro3 is modified to N-acetylproline. Lys14 is modified (N6,N6,N6-trimethyllysine). Substrate is bound by residues Asn123 and Thr173. Residue Lys175 is the Proton acceptor of the active site. A substrate-binding site is contributed by Lys177. 3 residues coordinate Mg(2+): Lys201, Asp203, and Glu204. Position 201 is an N6-carboxylysine (Lys201). Residue His294 is the Proton acceptor of the active site. Arg295, His327, and Ser379 together coordinate substrate.

The protein belongs to the RuBisCO large chain family. Type I subfamily. As to quaternary structure, heterohexadecamer of 8 large chains and 8 small chains. It depends on Mg(2+) as a cofactor.

It localises to the plastid. The protein resides in the chloroplast. It catalyses the reaction 2 (2R)-3-phosphoglycerate + 2 H(+) = D-ribulose 1,5-bisphosphate + CO2 + H2O. The catalysed reaction is D-ribulose 1,5-bisphosphate + O2 = 2-phosphoglycolate + (2R)-3-phosphoglycerate + 2 H(+). Functionally, ruBisCO catalyzes two reactions: the carboxylation of D-ribulose 1,5-bisphosphate, the primary event in carbon dioxide fixation, as well as the oxidative fragmentation of the pentose substrate in the photorespiration process. Both reactions occur simultaneously and in competition at the same active site. The protein is Ribulose bisphosphate carboxylase large chain of Dunaliella tertiolecta (Green alga).